The primary structure comprises 311 residues: Methionyl-tRNA formyltransferase (311 aa).

111–114 (SLLP) contributes to the (6S)-5,6,7,8-tetrahydrofolate binding site.

The protein belongs to the Fmt family.

It catalyses the reaction L-methionyl-tRNA(fMet) + (6R)-10-formyltetrahydrofolate = N-formyl-L-methionyl-tRNA(fMet) + (6S)-5,6,7,8-tetrahydrofolate + H(+). Its function is as follows. Attaches a formyl group to the free amino group of methionyl-tRNA(fMet). The formyl group appears to play a dual role in the initiator identity of N-formylmethionyl-tRNA by promoting its recognition by IF2 and preventing the misappropriation of this tRNA by the elongation apparatus. The sequence is that of Methionyl-tRNA formyltransferase from Caldicellulosiruptor saccharolyticus (strain ATCC 43494 / DSM 8903 / Tp8T 6331).